A 143-amino-acid chain; its full sequence is Ribonuclease H (143 aa).

An RNase H type-1 domain is found at 1–140 (MKVEIYTDGA…VDALANLGIE (140 aa)). Residues D8, E46, D68, and D132 each contribute to the Mg(2+) site.

Belongs to the RNase H family. Monomer. Requires Mg(2+) as cofactor.

Its subcellular location is the cytoplasm. The catalysed reaction is Endonucleolytic cleavage to 5'-phosphomonoester.. Functionally, endonuclease that specifically degrades the RNA of RNA-DNA hybrids. The sequence is that of Ribonuclease H from Legionella pneumophila (strain Paris).